Here is a 467-residue protein sequence, read N- to C-terminus: Light-independent protochlorophyllide reductase subunit N (467 aa).

The [4Fe-4S] cluster site is built by Cys-24, Cys-49, and Cys-109.

It belongs to the BchN/ChlN family. As to quaternary structure, protochlorophyllide reductase is composed of three subunits; ChlL, ChlN and ChlB. Forms a heterotetramer of two ChlB and two ChlN subunits. The cofactor is [4Fe-4S] cluster.

The enzyme catalyses chlorophyllide a + oxidized 2[4Fe-4S]-[ferredoxin] + 2 ADP + 2 phosphate = protochlorophyllide a + reduced 2[4Fe-4S]-[ferredoxin] + 2 ATP + 2 H2O. Its pathway is porphyrin-containing compound metabolism; chlorophyll biosynthesis (light-independent). Component of the dark-operative protochlorophyllide reductase (DPOR) that uses Mg-ATP and reduced ferredoxin to reduce ring D of protochlorophyllide (Pchlide) to form chlorophyllide a (Chlide). This reaction is light-independent. The NB-protein (ChlN-ChlB) is the catalytic component of the complex. The sequence is that of Light-independent protochlorophyllide reductase subunit N from Leptolyngbya boryana (Plectonema boryanum).